Consider the following 256-residue polypeptide: Coiled-coil domain-containing protein 90B, mitochondrial (256 aa).

The N-terminal 42 residues, methionine 1–serine 42, are a transit peptide targeting the mitochondrion. Residues alanine 106–alanine 164 are a coiled coil. The chain crosses the membrane as a helical span at residues threonine 231–tryptophan 253.

It belongs to the CCDC90 family. In terms of assembly, interacts with MCU.

It is found in the mitochondrion membrane. This is Coiled-coil domain-containing protein 90B, mitochondrial (Ccdc90b) from Rattus norvegicus (Rat).